We begin with the raw amino-acid sequence, 544 residues long: Membrane protein insertase YidC (544 aa).

Transmembrane regions (helical) follow at residues 13 to 33 (LSLF…SNIL), 343 to 363 (WGLS…PLTF), 409 to 429 (LGGC…YSLV), 461 to 481 (LYFV…FTQL), and 506 to 526 (MPIM…IYWI).

The protein belongs to the OXA1/ALB3/YidC family. Type 1 subfamily. Interacts with the Sec translocase complex via SecD. Specifically interacts with transmembrane segments of nascent integral membrane proteins during membrane integration.

It localises to the cell inner membrane. Functionally, required for the insertion and/or proper folding and/or complex formation of integral membrane proteins into the membrane. Involved in integration of membrane proteins that insert both dependently and independently of the Sec translocase complex, as well as at least some lipoproteins. Aids folding of multispanning membrane proteins. This is Membrane protein insertase YidC from Borreliella burgdorferi (strain ZS7) (Borrelia burgdorferi).